A 145-amino-acid polypeptide reads, in one-letter code: Probable inactive ribonuclease-like protein 12 (145 aa).

Residues 1-19 (MVLMVVVFLLLLFWENELT) form the signal peptide.

It belongs to the pancreatic ribonuclease family.

It is found in the secreted. Its function is as follows. Does not exhibit any ribonuclease activity. The chain is Probable inactive ribonuclease-like protein 12 (Rnase12) from Mus musculus (Mouse).